Here is a 3788-residue protein sequence, read N- to C-terminus: Lysosomal-trafficking regulator (3788 aa).

Disordered regions lie at residues 148–180 (KSTHRYSVRDARKTQLSTSDSEGNSDEKSTVVS) and 198–217 (EGHLVAKPDPSATKEQVLSD). At S164 the chain carries Phosphoserine. T165 carries the post-translational modification Phosphothreonine. Residue S166 is modified to Phosphoserine. Residues 662–700 (GPTSGLPSPSYRFQGILPSSGSEDLLWKWDALEAYQSFV) form a WD 1 repeat. Disordered stretches follow at residues 1169-1196 (LGPGDAVTEKSHPSEEELLSQPGDFSEE), 1213-1240 (GYEADSESNPEDVDTQDDGVELNPEAEG), and 1482-1519 (ESAAERGKRVKKRNKPSVLEDSSFEGAEGDRPEVTESI). Positions 1213 to 1232 (GYEADSESNPEDVDTQDDGV) are enriched in acidic residues. Residues S1503 and S1504 each carry the phosphoserine modification. The WD 2 repeat unit spans residues 1576 to 1620 (SQENIFFPSKWQHLVLTYIQHPQGKKNVHGEISIWVSGQRKTDVI). 5 positions are modified to phosphoserine: S2099, S2118, S2203, S2207, and S2254. Residues 2177-2221 (ANGVSRGSPRFPRARVDHKDVGTEPRSDDDSPGDESYPRRPDNLK) are disordered. Basic and acidic residues predominate over residues 2190-2205 (ARVDHKDVGTEPRSDD). Disordered regions lie at residues 2556–2581 (HDSESPVHSPSAHRHSVPPKRRSIAG) and 2659–2681 (NTSQSKTSVSQTEISEEDMHHEQ). A compositionally biased stretch (basic residues) spans 2566–2578 (SAHRHSVPPKRRS). Positions 2659-2671 (NTSQSKTSVSQTE) are enriched in polar residues. One can recognise a BEACH-type PH domain in the interval 2996–3102 (AASESIRVNR…VRDDVYQSIL (107 aa)). The BEACH domain occupies 3126 to 3409 (QITNFEYLTH…QLFHTAHASR (284 aa)). WD repeat units follow at residues 3550–3589 (SQQHQVTSCAWVPDSCQLFTGSKCGVITAYTNRLTSSTPS), 3601–3640 (GHTEEITGLCVCKPYSVMISVSRDGTCIVWDLNRLCYVQS), 3643–3686 (GHKS…VGHV), 3687–3731 (HCRE…PVRE), and 3736–3775 (KSNKPIISLTFSCDGHHLYTANSEGTVIAWCRKDQQRVKL).

In terms of assembly, interacts with CPAP, LIP8 and ZNF521. In terms of tissue distribution, expressed in the heart, lung, liver, spleen, brain and in different immune cell types (purified B and T lymphocytes, bone marrow-derived macrophages and dendritic cells).

The protein resides in the cytoplasm. Adapter protein that regulates and/or fission of intracellular vesicles such as lysosomes. Might regulate trafficking of effectors involved in exocytosis. In cytotoxic T-cells and natural killer (NK) cells, has role in the regulation of size, number and exocytosis of lytic granules. In macrophages and dendritic cells, regulates phagosome maturation by controlling the conversion of early phagosomal compartments into late phagosomes. In macrophages and dendritic cells, specifically involved in TLR3- and TLR4-induced production of pro-inflammatory cytokines by regulating the endosomal TLR3- TICAM1/TRIF and TLR4- TICAM1/TRIF signaling pathways. This is Lysosomal-trafficking regulator (Lyst) from Mus musculus (Mouse).